Here is a 101-residue protein sequence, read N- to C-terminus: Thioredoxin 1 (101 aa).

Residues 2–101 (AQTLDDLIRT…MRQEVLKAIG (100 aa)) enclose the Thioredoxin domain. C25 and C28 form a disulfide bridge.

Belongs to the thioredoxin family.

In terms of biological role, participates in various redox reactions through the reversible oxidation of its active center dithiol to a disulfide and catalyzes dithiol-disulfide exchange reactions. In Chlorobaculum tepidum (strain ATCC 49652 / DSM 12025 / NBRC 103806 / TLS) (Chlorobium tepidum), this protein is Thioredoxin 1 (trx1).